We begin with the raw amino-acid sequence, 30 residues long: Nattererin-1 (30 aa).

As to expression, expressed by the skin glands.

Its subcellular location is the secreted. Functionally, probably has antibacterial activity. The chain is Nattererin-1 from Physalaemus nattereri (Cuyaba dwarf frog).